Consider the following 81-residue polypeptide: U1-sicaritoxin-Li1c (81 aa).

Residues 1–16 (ARGDAEKWESLISEER) constitute a propeptide that is removed on maturation. 4 disulfides stabilise this stretch: C18–C35, C26–C40, C34–C53, and C42–C51. An Arginine amide modification is found at R62. Residues 66–81 (ALMLDPETHRLLFSED) constitute a propeptide that is removed on maturation.

It belongs to the neurotoxin 28 (Litx) family. Expressed by the venom gland.

It is found in the secreted. Toxin active against insects (S.frugiperda larvae). May act on sodium (Nav) or calcium (Cav) channels. This is U1-sicaritoxin-Li1c from Loxosceles intermedia (Brown spider).